Reading from the N-terminus, the 253-residue chain is MAKAAVTKRHHFMIQKLLILLSYGYTNGLDDAHSLRCNLTIKAPTPADPLWYEAKCLVDEILILHLSNINKTMTSGDPGETANATEVGECLTQPVNDLCQKLRDKVSNTKVDTHKTNGYPHLQVTMIYPQSQGQTPSATWEFNISDSYFFTFYTENMSWRSANDESGVIMNKWNDDGDLVQRLKYFIPECRQKIDEFLKQSKEKPRSTSRSPSITQLTSTSPLPPPSHSTSKKGFISVGLIFISLLFAFAFAM.

The signal sequence occupies residues M1 to G28. An intrachain disulfide couples C37 to C56. Residues N38, N70, N83, N143, and N156 are each glycosylated (N-linked (GlcNAc...) asparagine). The cysteines at positions 90 and 190 are disulfide-linked. The disordered stretch occupies residues L198–T230. The segment covering S211–S221 has biased composition (low complexity). Residue S227 is the site of GPI-anchor amidated serine attachment. Positions H228–M253 are cleaved as a propeptide — removed in mature form.

The protein belongs to the NKG2D ligand family. In terms of processing, glycosylated. As to expression, expressed predominantly in embryonic brain.

It localises to the cell membrane. Functionally, acts as a ligand for KLRK1. The sequence is that of Retinoic acid early-inducible protein 1-gamma (Raet1c) from Mus musculus (Mouse).